A 642-amino-acid polypeptide reads, in one-letter code: Protein BZZ1 (642 aa).

Residues 6 to 272 (YKFSDELHDD…EIAKNEPVLD (267 aa)) form the F-BAR domain. A coiled-coil region spans residues 113-190 (LDIAEKLKKL…QRNLKLSESD (78 aa)). The Phorbol-ester/DAG-type zinc finger occupies 397–447 (FHDFKHVSFKLPTSCSYCREIIWGLSKRGCVCKNCGFKCHARCELLVPANC). SH3 domains follow at residues 515-575 (ASKV…LNDE) and 584-642 (GDSS…VTDV).

It belongs to the BZZ1 family.

It localises to the cell tip. The protein localises to the cytoplasm. The protein resides in the cytoskeleton. It is found in the actin patch. Functionally, plays a role in endocytosis and trafficking to the vacuole. Functions with type I myosins to restore polarity of the actin cytoskeleton after NaCl stress. The sequence is that of Protein BZZ1 (bzz1) from Schizosaccharomyces pombe (strain 972 / ATCC 24843) (Fission yeast).